The following is a 116-amino-acid chain: Large ribosomal subunit protein uL18 (116 aa).

This sequence belongs to the universal ribosomal protein uL18 family. In terms of assembly, part of the 50S ribosomal subunit; part of the 5S rRNA/L5/L18/L25 subcomplex. Contacts the 5S and 23S rRNAs.

Its function is as follows. This is one of the proteins that bind and probably mediate the attachment of the 5S RNA into the large ribosomal subunit, where it forms part of the central protuberance. This chain is Large ribosomal subunit protein uL18, found in Cellvibrio japonicus (strain Ueda107) (Pseudomonas fluorescens subsp. cellulosa).